The sequence spans 1012 residues: ATP-dependent DNA helicase MPH1 (1012 aa).

The region spanning 94-261 (IVQKSLYQNT…EVVNNLNISN (168 aa)) is the Helicase ATP-binding domain. 107 to 114 (IPTGMGKT) lines the ATP pocket. Residues 209-212 (DEAH) carry the DEAH box motif. The Helicase C-terminal domain maps to 430–654 (KLQKIINELS…NFVEYKKSDR (225 aa)). The disordered stretch occupies residues 493–555 (DEGFIRKNKP…AQISGMNQKQ (63 aa)). Residues 498-510 (RKNKPKGRKKADR) are compositionally biased toward basic residues. The span at 511–537 (LKRLEEDKQKQLSKAKQKEQEKVERSS) shows a compositional bias: basic and acidic residues.

Belongs to the DEAD box helicase family. DEAH subfamily. FANCM sub-subfamily. As to quaternary structure, interacts with the MHF histone-fold complex to form the FANCM-MHF complex.

It localises to the nucleus. The catalysed reaction is ATP + H2O = ADP + phosphate + H(+). Its function is as follows. ATP-dependent DNA helicase involved in DNA damage repair by homologous recombination and in genome maintenance. Capable of unwinding D-loops. Plays a role in limiting crossover recombinants during mitotic DNA double-strand break (DSB) repair. Component of a FANCM-MHF complex which promotes gene conversion at blocked replication forks, probably by reversal of the stalled fork. The polypeptide is ATP-dependent DNA helicase MPH1 (Vanderwaltozyma polyspora (strain ATCC 22028 / DSM 70294 / BCRC 21397 / CBS 2163 / NBRC 10782 / NRRL Y-8283 / UCD 57-17) (Kluyveromyces polysporus)).